The following is a 336-amino-acid chain: UDP-3-O-acylglucosamine N-acyltransferase (336 aa).

Histidine 233 (proton acceptor) is an active-site residue.

The protein belongs to the transferase hexapeptide repeat family. LpxD subfamily. As to quaternary structure, homotrimer.

It catalyses the reaction a UDP-3-O-[(3R)-3-hydroxyacyl]-alpha-D-glucosamine + a (3R)-hydroxyacyl-[ACP] = a UDP-2-N,3-O-bis[(3R)-3-hydroxyacyl]-alpha-D-glucosamine + holo-[ACP] + H(+). It functions in the pathway bacterial outer membrane biogenesis; LPS lipid A biosynthesis. Its function is as follows. Catalyzes the N-acylation of UDP-3-O-acylglucosamine using 3-hydroxyacyl-ACP as the acyl donor. Is involved in the biosynthesis of lipid A, a phosphorylated glycolipid that anchors the lipopolysaccharide to the outer membrane of the cell. The chain is UDP-3-O-acylglucosamine N-acyltransferase from Helicobacter pylori (strain ATCC 700392 / 26695) (Campylobacter pylori).